Reading from the N-terminus, the 813-residue chain is Disintegrin and metalloproteinase domain-containing protein 33 (813 aa).

Positions methionine 1–glycine 29 are cleaved as a signal peptide. A propeptide spanning residues valine 30–arginine 203 is cleaved from the precursor. Residues valine 30 to threonine 701 are Extracellular-facing. An N-linked (GlcNAc...) asparagine glycan is attached at asparagine 109. The Cysteine switch motif lies at cysteine 131–glycine 138. Position 133 (cysteine 133) interacts with Zn(2+). Asparagine 145 carries N-linked (GlcNAc...) asparagine glycosylation. Residues proline 184 to alanine 205 are disordered. Positions lysine 210–proline 409 constitute a Peptidase M12B domain. Asparagine 231 and asparagine 276 each carry an N-linked (GlcNAc...) asparagine glycan. Disulfide bonds link cysteine 320/cysteine 404, cysteine 360/cysteine 388, and cysteine 361/cysteine 371. Residue histidine 345 coordinates Zn(2+). The active site involves glutamate 346. Residues histidine 349 and histidine 355 each coordinate Zn(2+). The region spanning proline 417–aspartate 503 is the Disintegrin domain. Asparagine 448 carries an N-linked (GlcNAc...) asparagine glycan. Cystine bridges form between cysteine 475–cysteine 495, cysteine 653–cysteine 663, cysteine 657–cysteine 669, and cysteine 671–cysteine 680. The EGF-like domain occupies glutamate 649–aspartate 681. The chain crosses the membrane as a helical span at residues phenylalanine 702 to tryptophan 722. Topologically, residues cysteine 723 to tryptophan 813 are cytoplasmic. The tract at residues serine 746–tryptophan 813 is disordered. A compositionally biased stretch (basic and acidic residues) spans glutamate 780 to lysine 791.

It depends on Zn(2+) as a cofactor. In terms of processing, the precursor is cleaved by a furin endopeptidase. Expressed in all tissues, except liver, with high expression in placenta, lung, spleen and veins.

It is found in the membrane. The sequence is that of Disintegrin and metalloproteinase domain-containing protein 33 (ADAM33) from Homo sapiens (Human).